The following is a 323-amino-acid chain: Leucine-rich repeat-containing protein 46 (323 aa).

LRR repeat units follow at residues 49 to 70, 71 to 92, 93 to 114, and 115 to 135; these read DLET…ERLR, NIHS…ACIT, SLRF…LDLQ, and YLQF…DELP. The LRRCT domain occupies 146–188; sequence NPCTNQDGYRKMVIGALPLLLDLDKQPILERWTSDEEDKSSDE. Threonine 178 bears the Phosphothreonine mark. Serine 179, serine 185, and serine 186 each carry phosphoserine. Residues 203–228 adopt a coiled-coil conformation; it reads RGFFKDLEQELHQHQERRQQAALTEH. Residues 252 to 323 are disordered; sequence DCSPAVTEEP…TKSTNKRGTK (72 aa). Residues 269-290 show a composition bias toward polar residues; that stretch reads ATSSTQMASSSKKQVPRNQKGS. Positions 297-310 are enriched in low complexity; the sequence is ALAATASKTSLAAA. Serine 303 is subject to Phosphoserine.

The protein localises to the cell projection. Its subcellular location is the cilium. The protein resides in the flagellum. Required for normal spermatogenesis and male fertility. Plays an important role in sperm flagellum biogenesis. The polypeptide is Leucine-rich repeat-containing protein 46 (Lrrc46) (Rattus norvegicus (Rat)).